Here is a 140-residue protein sequence, read N- to C-terminus: Putative pre-16S rRNA nuclease (140 aa).

It belongs to the YqgF nuclease family.

The protein resides in the cytoplasm. Its function is as follows. Could be a nuclease involved in processing of the 5'-end of pre-16S rRNA. The sequence is that of Putative pre-16S rRNA nuclease from Endomicrobium trichonymphae.